Reading from the N-terminus, the 215-residue chain is Sodium channel regulatory subunit beta-3 (215 aa).

Positions 1–22 (MPAFNRLFPLASLLLILWVGVC) are cleaved as a signal peptide. The Extracellular portion of the chain corresponds to 23 to 156 (FPVCVEVPSE…EEAGEDFTSV (134 aa)). 2 cysteine pairs are disulfide-bonded: Cys-26–Cys-48 and Cys-45–Cys-120. In terms of domain architecture, Ig-like C2-type spans 32-154 (ETEAVQGNPM…VTEEAGEDFT (123 aa)). 4 N-linked (GlcNAc...) asparagine glycosylation sites follow: Asn-95, Asn-109, Asn-113, and Asn-121. Residues 157–178 (VSEIMMYILLVFLTLWLLIEMI) traverse the membrane as a helical segment. Over 179 to 215 (YCYRKVSKAEEAAQENASDYLAIPSENKENSAVPVEE) the chain is Cytoplasmic.

It belongs to the sodium channel auxiliary subunit SCN3B (TC 8.A.17) family. As to quaternary structure, a voltage-gated sodium (Nav) channel consists of an ion-conducting pore-forming alpha subunit functional on its own that is regulated by one or more beta subunits. Forms homodimers and homotrimers. SCN3B is non-covalently associated with alpha subunits and induces the formation of alpha subunit oligomers, including trimers. Interacts with SCN5A/Nav1.5; regulatory subunit of SCN5A/Nav1.5. Interacts with SCN7A/Nav2.1; probable regulatory subunit of SCN7A/Nav2.1. Interacts with SCN10A; regulatory subunit of SCN10A/Nav1.8. Interacts with NFASC; probably involved in targeting the sodium channels to the nodes of Ranvier. Post-translationally, intramolecular disulfide bonds favor the voltage-gated sodium channel oligomeric complex assembly. N-glycosylated.

Its subcellular location is the cell membrane. In terms of biological role, regulatory subunit of multiple voltage-gated sodium (Nav) channels directly mediating the depolarization of excitable membranes. Navs, also called VGSCs (voltage-gated sodium channels) or VDSCs (voltage-dependent sodium channels), operate by switching between closed and open conformations depending on the voltage difference across the membrane. In the open conformation they allow Na(+) ions to selectively pass through the pore, along their electrochemical gradient. The influx of Na+ ions provokes membrane depolarization, initiating the propagation of electrical signals throughout cells and tissues. The accessory beta subunits participate in localization and functional modulation of the Nav channels. Modulates the activity of SCN2A/Nav1.2, causing a hyperpolarizing shift in the voltage-dependence of inactivation of the channel and increasing the fraction of channels operating in the fast gating mode. Modulates the activity of SCN5A/Nav1.5. Could also regulate the atypical sodium channel SCN7A/Nav2.1. Modulates the activity of SCN10A/Nav1.8, regulating its oligomerization and accelerating the recovery from inactivation. This is Sodium channel regulatory subunit beta-3 from Bos taurus (Bovine).